The sequence spans 274 residues: MTDISFTTSLPAGPAPGAIVQPEGPAKVTVRDLNFYYGDNRALKDINLNLAANRVTAFIGPSGCGKSTLLRIFNRMYDLYPGQRAEGQVMLDGHNILDPKLDLNLLRARVGMVFQKPTPFPMTIYENIAFGIRLYEKISKSEMDGRVEKALRGGALWNEVKDKLSASGLSLSGGQQQRLCIARTIAVRPEVILFDEPCSALDPISTAKIEELIDELKEEYTIAIVTHNMQQAARVSESTAFMYLGELIEFGPTDKIFTSPNDRRTQDYITGRFG.

In terms of domain architecture, ABC transporter spans 28–269; the sequence is VTVRDLNFYY…PNDRRTQDYI (242 aa). Residue 60–67 coordinates ATP; the sequence is GPSGCGKS.

Belongs to the ABC transporter superfamily. Phosphate importer (TC 3.A.1.7) family. In terms of assembly, the complex is composed of two ATP-binding proteins (PstB), two transmembrane proteins (PstC and PstA) and a solute-binding protein (PstS).

The protein localises to the cell inner membrane. It carries out the reaction phosphate(out) + ATP + H2O = ADP + 2 phosphate(in) + H(+). Its function is as follows. Part of the ABC transporter complex PstSACB involved in phosphate import. Responsible for energy coupling to the transport system. The protein is Phosphate import ATP-binding protein PstB of Rhodopseudomonas palustris (strain HaA2).